The sequence spans 534 residues: CTP synthase (534 aa).

The tract at residues 1–267 (MSKYIVVTGG…GSYILNRLNI (267 aa)) is amidoligase domain. Ser-13 lines the CTP pocket. Ser-13 contacts UTP. Residue 14-19 (SIGKGI) coordinates ATP. Tyr-54 contributes to the L-glutamine binding site. Asp-71 is an ATP binding site. Asp-71 and Glu-141 together coordinate Mg(2+). CTP is bound by residues 148-150 (DIE), 188-193 (KTKPTQ), and Lys-224. Residues 188–193 (KTKPTQ) and Lys-224 each bind UTP. A Glutamine amidotransferase type-1 domain is found at 294 to 532 (KIAVVGKYIE…IKAAKNKKQN (239 aa)). L-glutamine is bound at residue Gly-353. Cys-380 (nucleophile; for glutamine hydrolysis) is an active-site residue. Residues 381-384 (LGLH), Glu-403, and Arg-460 contribute to the L-glutamine site. Active-site residues include His-505 and Glu-507.

Belongs to the CTP synthase family. As to quaternary structure, homotetramer.

The catalysed reaction is UTP + L-glutamine + ATP + H2O = CTP + L-glutamate + ADP + phosphate + 2 H(+). The enzyme catalyses L-glutamine + H2O = L-glutamate + NH4(+). It carries out the reaction UTP + NH4(+) + ATP = CTP + ADP + phosphate + 2 H(+). Its pathway is pyrimidine metabolism; CTP biosynthesis via de novo pathway; CTP from UDP: step 2/2. Its activity is regulated as follows. Allosterically activated by GTP, when glutamine is the substrate; GTP has no effect on the reaction when ammonia is the substrate. The allosteric effector GTP functions by stabilizing the protein conformation that binds the tetrahedral intermediate(s) formed during glutamine hydrolysis. Inhibited by the product CTP, via allosteric rather than competitive inhibition. Its function is as follows. Catalyzes the ATP-dependent amination of UTP to CTP with either L-glutamine or ammonia as the source of nitrogen. Regulates intracellular CTP levels through interactions with the four ribonucleotide triphosphates. The protein is CTP synthase of Methanosphaera stadtmanae (strain ATCC 43021 / DSM 3091 / JCM 11832 / MCB-3).